Reading from the N-terminus, the 386-residue chain is Protein phosphatase methylesterase 1 (386 aa).

The disordered stretch occupies residues 1–38 (MSALEKSMHLGRLPSRPPLPGSGGSQSGAKMRMGPGRK). Phosphoserine is present on serine 15. Arginine 16 carries the post-translational modification Asymmetric dimethylarginine; alternate. An Omega-N-methylarginine; alternate modification is found at arginine 16. At serine 42 the chain carries Phosphoserine. Catalysis depends on residues serine 156 and aspartate 181. Over residues 254-265 (IIEEEEEDEEGS) the composition is skewed to acidic residues. The tract at residues 254 to 280 (IIEEEEEDEEGSESISKRKKEDDMETK) is disordered. A compositionally biased stretch (basic and acidic residues) spans 268–280 (ISKRKKEDDMETK). Histidine 349 is a catalytic residue.

This sequence belongs to the AB hydrolase superfamily. Binds PPP2CA and PPP2CB. In terms of processing, phosphorylated by SIK1 following increases in intracellular sodium, leading to dissociation from the protein phosphatase 2A (PP2A) complex and subsequent dephosphorylation of sodium/potassium-transporting ATPase ATP1A1.

It carries out the reaction [phosphatase 2A protein]-C-terminal L-leucine methyl ester + H2O = [phosphatase 2A protein]-C-terminal L-leucine + methanol + H(+). In terms of biological role, demethylates proteins that have been reversibly carboxymethylated. Demethylates PPP2CB (in vitro) and PPP2CA. Binding to PPP2CA displaces the manganese ion and inactivates the enzyme. This chain is Protein phosphatase methylesterase 1 (PPME1), found in Homo sapiens (Human).